Reading from the N-terminus, the 365-residue chain is Flagellar P-ring protein (365 aa).

The signal sequence occupies residues 1–21; it reads MKSLRLVALFCCLLPLGMAHA.

The protein belongs to the FlgI family. As to quaternary structure, the basal body constitutes a major portion of the flagellar organelle and consists of four rings (L,P,S, and M) mounted on a central rod.

It localises to the periplasm. It is found in the bacterial flagellum basal body. Its function is as follows. Assembles around the rod to form the L-ring and probably protects the motor/basal body from shearing forces during rotation. The chain is Flagellar P-ring protein from Aeromonas hydrophila subsp. hydrophila (strain ATCC 7966 / DSM 30187 / BCRC 13018 / CCUG 14551 / JCM 1027 / KCTC 2358 / NCIMB 9240 / NCTC 8049).